The following is a 358-amino-acid chain: Biotin synthase (358 aa).

In terms of domain architecture, Radical SAM core spans 44–272 (NRVRLNYLVN…DSEVRAAAGR (229 aa)). 3 residues coordinate [4Fe-4S] cluster: Cys59, Cys63, and Cys66. [2Fe-2S] cluster is bound by residues Cys103, Cys136, Cys196, and Arg267.

The protein belongs to the radical SAM superfamily. Biotin synthase family. As to quaternary structure, homodimer. Requires [4Fe-4S] cluster as cofactor. It depends on [2Fe-2S] cluster as a cofactor.

The catalysed reaction is (4R,5S)-dethiobiotin + (sulfur carrier)-SH + 2 reduced [2Fe-2S]-[ferredoxin] + 2 S-adenosyl-L-methionine = (sulfur carrier)-H + biotin + 2 5'-deoxyadenosine + 2 L-methionine + 2 oxidized [2Fe-2S]-[ferredoxin]. The protein operates within cofactor biosynthesis; biotin biosynthesis; biotin from 7,8-diaminononanoate: step 2/2. Its function is as follows. Catalyzes the conversion of dethiobiotin (DTB) to biotin by the insertion of a sulfur atom into dethiobiotin via a radical-based mechanism. The protein is Biotin synthase of Cutibacterium acnes (strain DSM 16379 / KPA171202) (Propionibacterium acnes).